The sequence spans 1914 residues: Myosin light chain kinase, smooth muscle (1914 aa).

Residue Gly-2 is modified to N-acetylalanine. Ig-like C2-type domains are found at residues 33 to 122 and 161 to 249; these read PAFI…VELT and PKFA…AELS. Cys-182 and Cys-233 are joined by a disulfide. Phosphotyrosine; by ABL1 is present on Tyr-231. The interval 286-393 is disordered; sequence DSLEAAAKSK…TRQPGLGSQD (108 aa). A Phosphoserine modification is found at Ser-305. Over residues 318–329 the composition is skewed to basic and acidic residues; that stretch reads RESKLESCKDSP. The span at 331 to 347 shows a compositional bias: polar residues; that stretch reads TAPQTPVLQKTSSSITL. Phosphoserine is present on residues Ser-343 and Ser-365. Ig-like C2-type domains are found at residues 414-503 and 514-599; these read PKFE…WTLQ and PSFS…AWVT. 2 cysteine pairs are disulfide-bonded: Cys-435-Cys-487 and Cys-535-Cys-583. Tyr-464 carries the phosphotyrosine; by ABL1 and SRC modification. Tyr-471 is modified (phosphotyrosine; by SRC). Tyr-556 bears the Phosphotyrosine; by ABL1 mark. An N6-acetyllysine modification is found at Lys-608. Tyr-611 carries the phosphotyrosine; by ABL1 modification. Ig-like C2-type domains lie at 620 to 711 and 721 to 821; these read PTAP…AVLT and PWFI…ALPR. An intrachain disulfide couples Cys-742 to Cys-805. Residues Tyr-792 and Tyr-846 each carry the phosphotyrosine; by ABL1 modification. Tandem repeats lie at residues 868-895, 896-923, 924-951, and 952-979. The tract at residues 868–998 is 5 X 28 AA approximate tandem repeats; the sequence is DVRGVLKRRV…KKLPAENGSS (131 aa). An actin-binding (calcium/calmodulin-sensitive) region spans residues 923–963; that stretch reads MDFRANLQRQVKPKTVSEEERKVHSPQQVDFRSVLAKKGTS. The segment at 932-1098 is disordered; that stretch reads QVKPKTVSEE…KRSESQGTAP (167 aa). Residue Ser-947 is modified to Phosphoserine. The segment at 948–963 is calmodulin-binding; it reads PQQVDFRSVLAKKGTS. One copy of the 1-5; truncated repeat lies at 980–998; that stretch reads DFRSVLGGKKKLPAENGSS. A 2-1; truncated repeat occupies 999–1003; the sequence is SAETL. Residues 999–1063 form a 6 X 12 AA approximate tandem repeats region; it reads SAETLNAKAV…KPDENLKSAS (65 aa). 5 repeat units span residues 1004–1015, 1016–1027, 1028–1039, 1040–1051, and 1052–1063. Residues 1054–1077 show a composition bias toward basic and acidic residues; the sequence is KPDENLKSASKEELKKDVKNDVNC. The segment at 1061 to 1460 is actin-binding (calcium/calmodulin-insensitive); the sequence is SASKEELKKD…TVTINTEQKV (400 aa). Residues 1098–1186 form the Ig-like C2-type 7 domain; the sequence is PAFKQKLQDV…GQAECSCQVT (89 aa). An intrachain disulfide couples Cys-1119 to Cys-1170. A disordered region spans residues 1192–1237; that stretch reads ASENTKAPEMKSRRPKSSLPPVLGTESDATVKKKPAPKTPPKAAMP. In terms of domain architecture, Ig-like C2-type 8 spans 1238-1326; it reads PQIIQFPEDQ…GSRQAQVNLT (89 aa). A Fibronectin type-III domain is found at 1334–1426; that stretch reads PAGTPCASDI…QESELTTVGE (93 aa). Polar residues predominate over residues 1413–1422; that stretch reads SEPSQESELT. The interval 1413-1446 is disordered; sequence SEPSQESELTTVGEKPEEPKDEVEVSDDDEKEPE. Acidic residues predominate over residues 1431-1445; that stretch reads PKDEVEVSDDDEKEP. A Phosphoserine modification is found at Ser-1438. Tyr-1449 bears the Phosphotyrosine; by ABL1 mark. In terms of domain architecture, Protein kinase spans 1464 to 1719; sequence YDIEERLGSG…CTQCLQHPWL (256 aa). ATP is bound by residues 1470–1478 and Lys-1493; that span reads LGSGKFGQV. Phosphotyrosine; by ABL1 is present on Tyr-1575. Catalysis depends on Asp-1585, which acts as the Proton acceptor. Residue Tyr-1635 is modified to Phosphotyrosine; by ABL1. Positions 1711–1774 are calmodulin-binding; the sequence is TQCLQHPWLM…SGLSGRKSST (64 aa). Phosphoserine occurs at positions 1759, 1760, 1772, 1773, and 1776. The tract at residues 1767-1787 is disordered; the sequence is LSGRKSSTGSPTSPLNAEKLE. Residues 1770–1781 show a composition bias toward polar residues; the sequence is RKSSTGSPTSPL. Position 1778 is a phosphothreonine (Thr-1778). Residue Ser-1779 is modified to Phosphoserine. Residues 1809–1898 enclose the Ig-like C2-type 9 domain; the sequence is PYFSKTIRDL…GEATCTAELI (90 aa). A disulfide bridge connects residues Cys-1830 and Cys-1882.

Belongs to the protein kinase superfamily. CAMK Ser/Thr protein kinase family. In terms of assembly, all isoforms including Telokin bind calmodulin. Interacts with SVIL. Interacts with CTTN; this interaction is reduced during thrombin-induced endothelial cell (EC) contraction but is promoted by the barrier-protective agonist sphingosine 1-phosphate (S1P) within lamellipodia. A complex made of ABL1, CTTN and MYLK regulates cortical actin-based cytoskeletal rearrangement critical to sphingosine 1-phosphate (S1P)-mediated endothelial cell (EC) barrier enhancement. Binds to NAA10/ARD1 and PTK2B/PYK2. The cofactor is Mg(2+). Requires Ca(2+) as cofactor. Post-translationally, can probably be down-regulated by phosphorylation. Tyrosine phosphorylation by ABL1 increases kinase activity, reverses MLCK-mediated inhibition of Arp2/3-mediated actin polymerization, and enhances CTTN-binding. Phosphorylation by SRC at Tyr-464 and Tyr-471 promotes CTTN binding. The C-terminus is deglutamylated by AGTPBP1/CCP1, AGBL1/CCP4 and AGBL4/CCP6, leading to the formation of Myosin light chain kinase, smooth muscle, deglutamylated form. The consequences of C-terminal deglutamylation are unknown. In terms of processing, acetylated at Lys-608 by NAA10/ARD1 via a calcium-dependent signaling; this acetylation represses kinase activity and reduces tumor cell migration. In terms of tissue distribution, smooth muscle and non-muscle isozymes are expressed in a wide variety of adult and fetal tissues and in cultured endothelium with qualitative expression appearing to be neither tissue- nor development-specific. Non-muscle isoform 2 is the dominant splice variant expressed in various tissues. Telokin has been found in a wide variety of adult and fetal tissues. Accumulates in well differentiated enterocytes of the intestinal epithelium in response to tumor necrosis factor (TNF).

The protein resides in the cytoplasm. Its subcellular location is the cell projection. The protein localises to the lamellipodium. It is found in the cleavage furrow. It localises to the cytoskeleton. The protein resides in the stress fiber. The catalysed reaction is L-seryl-[myosin light chain] + ATP = O-phospho-L-seryl-[myosin light chain] + ADP + H(+). The enzyme catalyses L-threonyl-[myosin light chain] + ATP = O-phospho-L-threonyl-[myosin light chain] + ADP + H(+). Isoform 1 is activated by phosphorylation on Tyr-464 and Tyr-471. Isoforms which lack these tyrosine residues are not regulated in this way. All catalytically active isoforms require binding to calcium and calmodulin for activation. Repressed by organometallic pyridylnaphthalimide complexes, wortmannin, ML-7 (a synthetic naphthalenesulphonyl derivative that inhibits the binding of ATP to MLCK) and ML-9. Calcium/calmodulin-dependent myosin light chain kinase implicated in smooth muscle contraction via phosphorylation of myosin light chains (MLC). Also regulates actin-myosin interaction through a non-kinase activity. Phosphorylates PTK2B/PYK2 and myosin light-chains. Involved in the inflammatory response (e.g. apoptosis, vascular permeability, leukocyte diapedesis), cell motility and morphology, airway hyperreactivity and other activities relevant to asthma. Required for tonic airway smooth muscle contraction that is necessary for physiological and asthmatic airway resistance. Necessary for gastrointestinal motility. Implicated in the regulation of endothelial as well as vascular permeability, probably via the regulation of cytoskeletal rearrangements. In the nervous system it has been shown to control the growth initiation of astrocytic processes in culture and to participate in transmitter release at synapses formed between cultured sympathetic ganglion cells. Critical participant in signaling sequences that result in fibroblast apoptosis. Plays a role in the regulation of epithelial cell survival. Required for epithelial wound healing, especially during actomyosin ring contraction during purse-string wound closure. Mediates RhoA-dependent membrane blebbing. Triggers TRPC5 channel activity in a calcium-dependent signaling, by inducing its subcellular localization at the plasma membrane. Promotes cell migration (including tumor cells) and tumor metastasis. PTK2B/PYK2 activation by phosphorylation mediates ITGB2 activation and is thus essential to trigger neutrophil transmigration during acute lung injury (ALI). May regulate optic nerve head astrocyte migration. Probably involved in mitotic cytoskeletal regulation. Regulates tight junction probably by modulating ZO-1 exchange in the perijunctional actomyosin ring. Mediates burn-induced microvascular barrier injury; triggers endothelial contraction in the development of microvascular hyperpermeability by phosphorylating MLC. Essential for intestinal barrier dysfunction. Mediates Giardia spp.-mediated reduced epithelial barrier function during giardiasis intestinal infection via reorganization of cytoskeletal F-actin and tight junctional ZO-1. Necessary for hypotonicity-induced Ca(2+) entry and subsequent activation of volume-sensitive organic osmolyte/anion channels (VSOAC) in cervical cancer cells. Responsible for high proliferative ability of breast cancer cells through anti-apoptosis. In Homo sapiens (Human), this protein is Myosin light chain kinase, smooth muscle.